Reading from the N-terminus, the 449-residue chain is Tubulin alpha chain (449 aa).

A GTP-binding site is contributed by Gln11. Lys40 is modified (N6-acetyllysine). 7 residues coordinate GTP: Glu71, Ser140, Gly144, Thr145, Thr179, Asn206, and Asn228. Glu71 provides a ligand contact to Mg(2+). Residue Glu254 is part of the active site.

It belongs to the tubulin family. Dimer of alpha and beta chains. A typical microtubule is a hollow water-filled tube with an outer diameter of 25 nm and an inner diameter of 15 nM. Alpha-beta heterodimers associate head-to-tail to form protofilaments running lengthwise along the microtubule wall with the beta-tubulin subunit facing the microtubule plus end conferring a structural polarity. Microtubules usually have 13 protofilaments but different protofilament numbers can be found in some organisms and specialized cells. The cofactor is Mg(2+). Post-translationally, undergoes a tyrosination/detyrosination cycle, the cyclic removal and re-addition of a C-terminal tyrosine residue by the enzymes tubulin tyrosine carboxypeptidase (TTCP) and tubulin tyrosine ligase (TTL), respectively. Acetylation of alpha chains at Lys-40 stabilizes microtubules and affects affinity and processivity of microtubule motors. This modification has a role in multiple cellular functions, ranging from cell motility, cell cycle progression or cell differentiation to intracellular trafficking and signaling.

The protein localises to the cytoplasm. It localises to the cytoskeleton. The catalysed reaction is GTP + H2O = GDP + phosphate + H(+). Functionally, tubulin is the major constituent of microtubules, a cylinder consisting of laterally associated linear protofilaments composed of alpha- and beta-tubulin heterodimers. Microtubules grow by the addition of GTP-tubulin dimers to the microtubule end, where a stabilizing cap forms. Below the cap, tubulin dimers are in GDP-bound state, owing to GTPase activity of alpha-tubulin. The polypeptide is Tubulin alpha chain (Tetrahymena pyriformis).